Here is a 457-residue protein sequence, read N- to C-terminus: Pup--protein ligase (457 aa).

Glu-9 provides a ligand contact to Mg(2+). Residue Arg-53 participates in ATP binding. Position 55 (Tyr-55) interacts with Mg(2+). Asp-57 serves as the catalytic Proton acceptor. Mg(2+) is bound at residue Glu-63. Positions 66 and 424 each coordinate ATP.

It belongs to the Pup ligase/Pup deamidase family. Pup-conjugating enzyme subfamily.

The catalysed reaction is ATP + [prokaryotic ubiquitin-like protein]-L-glutamate + [protein]-L-lysine = ADP + phosphate + N(6)-([prokaryotic ubiquitin-like protein]-gamma-L-glutamyl)-[protein]-L-lysine.. Its pathway is protein degradation; proteasomal Pup-dependent pathway. The protein operates within protein modification; protein pupylation. Its function is as follows. Catalyzes the covalent attachment of the prokaryotic ubiquitin-like protein modifier Pup to the proteasomal substrate proteins, thereby targeting them for proteasomal degradation. This tagging system is termed pupylation. The ligation reaction involves the side-chain carboxylate of the C-terminal glutamate of Pup and the side-chain amino group of a substrate lysine. The protein is Pup--protein ligase of Xylanimonas cellulosilytica (strain DSM 15894 / JCM 12276 / CECT 5975 / KCTC 9989 / LMG 20990 / NBRC 107835 / XIL07).